The following is a 222-amino-acid chain: Glutathione S-transferase A2 (222 aa).

At A2 the chain carries N-acetylalanine. In terms of domain architecture, GST N-terminal spans 3–83 (EKPKLHYSNI…YIASKYNLYG (81 aa)). Residue K4 is modified to N6-succinyllysine. Glutathione-binding positions include Y9, R45, 54 to 55 (QV), and 67 to 68 (QT). In terms of domain architecture, GST C-terminal spans 85–207 (DIKEKALIDM…LQPGSPRKPP (123 aa)). The interval 199–222 (QPGSPRKPPMDEKSLEESRKIFRF) is disordered. The segment covering 206–222 (PPMDEKSLEESRKIFRF) has biased composition (basic and acidic residues).

It belongs to the GST superfamily. Alpha family. Homodimer or heterodimer of GSTA1 and GSTA2. In terms of tissue distribution, liver.

It is found in the cytoplasm. It carries out the reaction RX + glutathione = an S-substituted glutathione + a halide anion + H(+). Functionally, catalyzes the conjugation of glutathione to a large variety of electrophilic compounds. The protein is Glutathione S-transferase A2 (GSTA2) of Homo sapiens (Human).